Consider the following 163-residue polypeptide: Protein-export protein SecB (163 aa).

The protein belongs to the SecB family. Homotetramer, a dimer of dimers. One homotetramer interacts with 1 SecA dimer.

It is found in the cytoplasm. Functionally, one of the proteins required for the normal export of preproteins out of the cell cytoplasm. It is a molecular chaperone that binds to a subset of precursor proteins, maintaining them in a translocation-competent state. It also specifically binds to its receptor SecA. In Brucella abortus (strain S19), this protein is Protein-export protein SecB.